The chain runs to 917 residues: Hexokinase-2 (917 aa).

The residue at position 1 (Met1) is an N-acetylmethionine. A mitochondrial-binding peptide (MBP) region spans residues 1–16 (MIASHMIACLFTELNQ). 2 consecutive Hexokinase domains span residues 16–458 (QNQV…MVTA) and 464–906 (ADQH…LITA). Residues Arg30 and 84–89 (DLGGTN) each bind ATP. Positions 73-207 (DGTEHGEFLA…DFDIDIVAVV (135 aa)) are hexokinase small subdomain 1. 84–88 (DLGGT) serves as a coordination point for D-glucose 6-phosphate. Residues 155-156 (SF), 172-173 (TK), and 208-209 (ND) each bind D-glucose. The hexokinase large subdomain 1 stretch occupies residues 208 to 447 (NDTVGTMMTC…CDVRFLRSED (240 aa)). Asp209 and Thr232 together coordinate D-glucose 6-phosphate. Residues Asn235, Glu260, and 291–294 (QLFE) each bind D-glucose. D-glucose 6-phosphate is bound at residue 413 to 415 (DGS). Position 425 to 426 (425 to 426 (KR)) interacts with ATP. D-glucose 6-phosphate-binding positions include Ser449 and 532 to 536 (DLGGT). The interval 521-655 (DGTEKGDFLA…EFDLDVVAVV (135 aa)) is hexokinase small subdomain 2. 532 to 537 (DLGGTN) contacts ATP. D-glucose-binding positions include 603-604 (SF), 620-621 (TK), and 656-657 (ND). The hexokinase large subdomain 2 stretch occupies residues 656 to 895 (NDTVGTMMTC…CDVSFLESED (240 aa)). D-glucose 6-phosphate contacts are provided by Asp657 and Thr680. An ATP-binding site is contributed by Thr680. D-glucose contacts are provided by residues 682–683 (SN), Glu708, and 739–742 (QRFE). ATP is bound by residues 747–748 (GM), 784–788 (TKFLS), and 863–867 (TLYKL). D-glucose 6-phosphate-binding positions include 861-863 (DGT) and Ser897.

The protein belongs to the hexokinase family. As to quaternary structure, monomer. Interacts with TIGAR; the interaction increases hexokinase activity in a hypoxia- and HIF1A-dependent manner.

It is found in the mitochondrion outer membrane. The protein resides in the cytoplasm. The protein localises to the cytosol. It catalyses the reaction a D-hexose + ATP = a D-hexose 6-phosphate + ADP + H(+). The catalysed reaction is D-fructose + ATP = D-fructose 6-phosphate + ADP + H(+). The enzyme catalyses D-glucose + ATP = D-glucose 6-phosphate + ADP + H(+). The protein operates within carbohydrate metabolism; hexose metabolism. It functions in the pathway carbohydrate degradation; glycolysis; D-glyceraldehyde 3-phosphate and glycerone phosphate from D-glucose: step 1/4. Hexokinase activity is specifically inhibited by 2,6-disubstituted glucosamines. Its function is as follows. Catalyzes the phosphorylation of hexose, such as D-glucose and D-fructose, to hexose 6-phosphate (D-glucose 6-phosphate and D-fructose 6-phosphate, respectively). Mediates the initial step of glycolysis by catalyzing phosphorylation of D-glucose to D-glucose 6-phosphate. Plays a key role in maintaining the integrity of the outer mitochondrial membrane by preventing the release of apoptogenic molecules from the intermembrane space and subsequent apoptosis. This chain is Hexokinase-2, found in Rattus norvegicus (Rat).